The sequence spans 88 residues: uncharacterized protein (88 aa).

This is an uncharacterized protein from Homo sapiens (Human).